We begin with the raw amino-acid sequence, 346 residues long: Nicotinate-nucleotide--dimethylbenzimidazole phosphoribosyltransferase (346 aa).

Residue E312 is the Proton acceptor of the active site.

It belongs to the CobT family.

It carries out the reaction 5,6-dimethylbenzimidazole + nicotinate beta-D-ribonucleotide = alpha-ribazole 5'-phosphate + nicotinate + H(+). Its pathway is nucleoside biosynthesis; alpha-ribazole biosynthesis; alpha-ribazole from 5,6-dimethylbenzimidazole: step 1/2. Catalyzes the synthesis of alpha-ribazole-5'-phosphate from nicotinate mononucleotide (NAMN) and 5,6-dimethylbenzimidazole (DMB). This chain is Nicotinate-nucleotide--dimethylbenzimidazole phosphoribosyltransferase, found in Cupriavidus taiwanensis (strain DSM 17343 / BCRC 17206 / CCUG 44338 / CIP 107171 / LMG 19424 / R1) (Ralstonia taiwanensis (strain LMG 19424)).